Here is a 71-residue protein sequence, read N- to C-terminus: Small ribosomal subunit protein bS18c (71 aa).

It belongs to the bacterial ribosomal protein bS18 family. In terms of assembly, part of the 30S ribosomal subunit.

It is found in the plastid. The protein resides in the cyanelle. The sequence is that of Small ribosomal subunit protein bS18c (rps18) from Cyanophora paradoxa.